A 659-amino-acid chain; its full sequence is Sodium/nucleoside cotransporter 2 (659 aa).

Residues 1–10 (MAKSEGRKSA) show a composition bias toward basic and acidic residues. Residues 1-22 (MAKSEGRKSASQDTSENGMENP) are disordered. S46 bears the Phosphoserine mark. 14 helical membrane-spanning segments follow: residues 81-101 (ILLG…CILN), 105-124 (ALAL…CHFL), 149-167 (KRVF…LALD), 173-193 (EQLI…ACSK), 201-221 (RTVF…IRTE), 234-254 (IQIF…DTLV), 261-281 (QSLP…YLGL), 296-315 (TMGT…FVGM), 337-356 (VMTG…FISF), 363-382 (LISA…KLVY), 424-444 (VAAN…TLSW), 455-475 (TFQV…GVQW), 530-550 (ATFS…LGGL), and 568-588 (ALFT…ILYV).

It belongs to the concentrative nucleoside transporter (CNT) (TC 2.A.41) family. As to expression, expressed in liver (in bile canalicular membrane vesicles (CMV) but not in sinusoidal vesicles), jejunum, spleen and heart. Also expressed in brain and skeletal muscle. Not expressed in kidney, muscle and lung.

The protein resides in the membrane. It localises to the apicolateral cell membrane. The catalysed reaction is adenosine(out) + Na(+)(out) = adenosine(in) + Na(+)(in). The enzyme catalyses inosine(out) + Na(+)(out) = inosine(in) + Na(+)(in). It catalyses the reaction guanosine(out) + Na(+)(out) = guanosine(in) + Na(+)(in). It carries out the reaction uridine(out) + Na(+)(out) = uridine(in) + Na(+)(in). With respect to regulation, inhibited by formycin B, partially inhibited by purine analog ara-A. In terms of biological role, sodium-dependent and purine-selective. Exhibits the transport characteristics of the nucleoside transport system cif or N1 subtype (N1/cif) (selective for purine nucleosides and uridine). Accepts purine, analogs of purine nucleosides and uridine, and exhibits high affinity for adenosine. May contribute to regulate the transport of organic compounds in testes across the blood-testis-barrier. The sequence is that of Sodium/nucleoside cotransporter 2 (Slc28a2) from Rattus norvegicus (Rat).